A 759-amino-acid chain; its full sequence is Arylphorin subunit C223 (759 aa).

The N-terminal stretch at 1 to 15 (MKIAIVLLAIVGLAA) is a signal peptide.

It belongs to the hemocyanin family. In terms of assembly, heterohexamer. Fat body.

Its subcellular location is the secreted. It localises to the extracellular space. Its function is as follows. Arylphorin is a larval storage protein (LSP) which may serve as a storage protein used primarily as a source of aromatic amino acids for protein synthesis during metamorphosis. It is a constituent of the sclerotizing system of the cuticle, and serves as a carrier for ecdysteroid hormone. This chain is Arylphorin subunit C223, found in Calliphora vicina (Blue blowfly).